The sequence spans 542 residues: CTP synthase (542 aa).

Positions 1–265 (MARYVFITGG…DDEVLAAFGI (265 aa)) are amidoligase domain. Ser-13 is a binding site for CTP. Ser-13 provides a ligand contact to UTP. ATP-binding positions include 14–19 (SLGKGI) and Asp-71. 2 residues coordinate Mg(2+): Asp-71 and Glu-139. Residues 146-148 (DIE), 186-191 (KTKPTQ), and Lys-222 contribute to the CTP site. UTP-binding positions include 186–191 (KTKPTQ) and Lys-222. The Glutamine amidotransferase type-1 domain occupies 291–541 (TIAIVGKYTG…IEAATEQSRL (251 aa)). Gly-353 is a binding site for L-glutamine. The Nucleophile; for glutamine hydrolysis role is filled by Cys-380. L-glutamine is bound by residues 381 to 384 (FGMQ), Glu-404, and Arg-469. Active-site residues include His-514 and Glu-516.

This sequence belongs to the CTP synthase family. In terms of assembly, homotetramer.

It carries out the reaction UTP + L-glutamine + ATP + H2O = CTP + L-glutamate + ADP + phosphate + 2 H(+). The enzyme catalyses L-glutamine + H2O = L-glutamate + NH4(+). It catalyses the reaction UTP + NH4(+) + ATP = CTP + ADP + phosphate + 2 H(+). It participates in pyrimidine metabolism; CTP biosynthesis via de novo pathway; CTP from UDP: step 2/2. Its activity is regulated as follows. Allosterically activated by GTP, when glutamine is the substrate; GTP has no effect on the reaction when ammonia is the substrate. The allosteric effector GTP functions by stabilizing the protein conformation that binds the tetrahedral intermediate(s) formed during glutamine hydrolysis. Inhibited by the product CTP, via allosteric rather than competitive inhibition. Its function is as follows. Catalyzes the ATP-dependent amination of UTP to CTP with either L-glutamine or ammonia as the source of nitrogen. Regulates intracellular CTP levels through interactions with the four ribonucleotide triphosphates. The chain is CTP synthase from Rhizobium etli (strain ATCC 51251 / DSM 11541 / JCM 21823 / NBRC 15573 / CFN 42).